Here is a 206-residue protein sequence, read N- to C-terminus: MELKLLQDNGILGAGVQASPEVFEREYNEALVHQVVVAYQANARSGNRAQKDREQVKHTTKKPWRQKGTGRARAGMSSSPLWRGGGRIFPNSPEENFSQKVNKKMYRAGMRSILSQLAREGRLNVIDQFNLDAPKTKVLAEKMKAMGLDSVLIIVDQVSENLYLASRNLHKVAVVEPQHADPLALVQYKKVLVSKAAITKIEELLK.

The tract at residues 43 to 78 is disordered; the sequence is ARSGNRAQKDREQVKHTTKKPWRQKGTGRARAGMSS. Residues 58 to 70 are compositionally biased toward basic residues; that stretch reads HTTKKPWRQKGTG.

This sequence belongs to the universal ribosomal protein uL4 family. In terms of assembly, part of the 50S ribosomal subunit.

One of the primary rRNA binding proteins, this protein initially binds near the 5'-end of the 23S rRNA. It is important during the early stages of 50S assembly. It makes multiple contacts with different domains of the 23S rRNA in the assembled 50S subunit and ribosome. Its function is as follows. Forms part of the polypeptide exit tunnel. The polypeptide is Large ribosomal subunit protein uL4 (Polynucleobacter necessarius subsp. necessarius (strain STIR1)).